Here is a 196-residue protein sequence, read N- to C-terminus: ATP-dependent Clp protease proteolytic subunit (196 aa).

Ser-101 functions as the Nucleophile in the catalytic mechanism. The active site involves His-126.

Belongs to the peptidase S14 family. As to quaternary structure, component of the chloroplastic Clp protease core complex.

It is found in the plastid. It localises to the chloroplast stroma. The enzyme catalyses Hydrolysis of proteins to small peptides in the presence of ATP and magnesium. alpha-casein is the usual test substrate. In the absence of ATP, only oligopeptides shorter than five residues are hydrolyzed (such as succinyl-Leu-Tyr-|-NHMec, and Leu-Tyr-Leu-|-Tyr-Trp, in which cleavage of the -Tyr-|-Leu- and -Tyr-|-Trp bonds also occurs).. Its function is as follows. Cleaves peptides in various proteins in a process that requires ATP hydrolysis. Has a chymotrypsin-like activity. Plays a major role in the degradation of misfolded proteins. The chain is ATP-dependent Clp protease proteolytic subunit from Barbarea verna (Land cress).